We begin with the raw amino-acid sequence, 489 residues long: Neuropeptide CCHamide-2 receptor (489 aa).

The Extracellular portion of the chain corresponds to Met1–Val74. N-linked (GlcNAc...) asparagine glycans are attached at residues Asn25 and Asn50. A helical membrane pass occupies residues Leu75 to Phe95. Topologically, residues Arg96–Tyr107 are cytoplasmic. A helical transmembrane segment spans residues Ile108–Ile128. The Extracellular portion of the chain corresponds to Val129–Arg143. The cysteines at positions 142 and 225 are disulfide-linked. Residues Ile144–Ser164 form a helical membrane-spanning segment. The Cytoplasmic segment spans residues Gly165–Thr184. Residues Val185–Phe205 traverse the membrane as a helical segment. Residues Ser206–Lys235 are Extracellular-facing. Asn219 carries N-linked (GlcNAc...) asparagine glycosylation. A helical membrane pass occupies residues Phe236–Leu256. Residues Tyr257–Met293 are Cytoplasmic-facing. A helical membrane pass occupies residues Val294–Trp314. Residues Tyr315–Arg333 lie on the Extracellular side of the membrane. Residues Ile334–Val354 traverse the membrane as a helical segment. Topologically, residues Ser355–Tyr489 are cytoplasmic. Residues Ser438–Gly468 form a disordered region. A compositionally biased stretch (gly residues) spans Ala452–Gly468.

Belongs to the G-protein coupled receptor 1 family. Highly expressed in larval brain. Also highly expressed in adult brain with very low levels in larval and adult gut.

Its subcellular location is the cell membrane. Its function is as follows. Receptor for the neuropeptide CCHamide-2. In Drosophila melanogaster (Fruit fly), this protein is Neuropeptide CCHamide-2 receptor.